Here is a 107-residue protein sequence, read N- to C-terminus: MNHLTTVLAARKTCVVREATNLYTVDTERRINKMGRDEEKKWRSRGGHWCMDDSIIQFTTFNQSCTLMGSTTATRANNETEKHEAITVFFVVFLYINKASVKFFFFA.

This is an uncharacterized protein from Saccharomyces cerevisiae (strain ATCC 204508 / S288c) (Baker's yeast).